The following is a 489-amino-acid chain: MEKSWFNFMFSKGELEYRSGLNKAMDSFAPIEKTTIKKDRFIYDMDKNFYGWGERSSYYNNVDLLVSSKDIRNFISDDTFFVRDSNKNSYSIYFDIKKNKFEINNDLSDLEFFFYSYCSSSYLNNRSKSDNDLHYDPYVKNTKSNCNNHINSCIDSYFRSHICIDSYFLSDSTNSNESYIYNFICSESGKIRESKNYKIRTKTNRNRNNLMNSKDFDITKNYNQLWIQCDNCYGLMYKKVEMNVCEECGHYLKMTSSERIELLIDPGTWNPMDEDMVSADPIKFHSREEPYKNRIDSAQKKTGLTDAVQTGTGQLNGIPVALGVMDFQFMGGSMGSVVGEKITRLIEYATNQCLPLILVCSSGGARMQEGSLSLMQMAKISSVLCDYQSSKKLFYISILTSPTTGGVTASFGMLGDIIIAEPYAYIAFAGKRVIEQTLKKAVPEGSQAAESLLRKGLLDAIVPRNPLKGVVSELFQLHAFFPLNKTEIK.

The CoA carboxyltransferase N-terminal domain maps to Leu225 to Lys489. Positions 229, 232, 245, and 248 each coordinate Zn(2+). The C4-type zinc-finger motif lies at Cys229 to Cys248.

Belongs to the AccD/PCCB family. In terms of assembly, acetyl-CoA carboxylase is a heterohexamer composed of biotin carboxyl carrier protein, biotin carboxylase and 2 subunits each of ACCase subunit alpha and ACCase plastid-coded subunit beta (accD). Zn(2+) serves as cofactor.

The protein resides in the plastid. Its subcellular location is the chloroplast stroma. The enzyme catalyses N(6)-carboxybiotinyl-L-lysyl-[protein] + acetyl-CoA = N(6)-biotinyl-L-lysyl-[protein] + malonyl-CoA. It functions in the pathway lipid metabolism; malonyl-CoA biosynthesis; malonyl-CoA from acetyl-CoA: step 1/1. In terms of biological role, component of the acetyl coenzyme A carboxylase (ACC) complex. Biotin carboxylase (BC) catalyzes the carboxylation of biotin on its carrier protein (BCCP) and then the CO(2) group is transferred by the transcarboxylase to acetyl-CoA to form malonyl-CoA. The protein is Acetyl-coenzyme A carboxylase carboxyl transferase subunit beta, chloroplastic of Draba nemorosa (Woodland whitlowgrass).